Consider the following 326-residue polypeptide: DNA repair protein XRCC4 (326 aa).

The interaction with IFFO1 stretch occupies residues 1 to 212 (MERKVSRIYL…QLEESTKPER (212 aa)). Position 53 is a phosphoserine; by PRKDC (serine 53). 2 coiled-coil regions span residues 131-165 (LDTITEKQAKNEHLQKENERLLRDWNDVQGRFEKC) and 185-209 (NEKKTKIRSLHKLLNEVQQLEESTK). The interaction with LIG4 stretch occupies residues 180-211 (FILVLNEKKTKIRSLHKLLNEVQQLEESTKPE). The residue at position 193 (serine 193) is a Phosphoserine; by PRKDC. Residues 203–326 (QLEESTKPER…RNSSPEDLFD (124 aa)) are disordered. Residues 206–226 (ESTKPERENPCSDKTPEEHGL) are compositionally biased toward basic and acidic residues. A Phosphotyrosine modification is found at tyrosine 227. Serine 230 is subject to Phosphoserine. Threonine 231 carries the phosphothreonine modification. Serine 235 is modified (phosphoserine). The residue at position 244 (threonine 244) is a Phosphothreonine. Serine 250 bears the Phosphoserine mark. Phosphoserine; by PRKDC is present on serine 254. Positions 264-269 (RKRRHR) match the Nuclear localization signal motif. Residue lysine 290 forms a Glycyl lysine isopeptide (Lys-Gly) (interchain with G-Cter in ubiquitin) linkage. Serine 295 bears the Phosphoserine; by PRKDC mark. Phosphoserine is present on serine 296. Serine 307 and serine 312 each carry phosphoserine; by PRKDC. The segment covering 307–326 (SAENMSLETLRNSSPEDLFD) has biased composition (polar residues). Phosphothreonine; by PRKDC is present on threonine 315. Serine 319 and serine 320 each carry phosphoserine; by PRKDC.

Belongs to the XRCC4-XLF family. XRCC4 subfamily. As to quaternary structure, homodimer and homotetramer in solution. Interacts with NHEJ1/XLF; the interaction is direct and is mediated via a head-to-head interaction between N-terminal head regions. Interacts with LIG4; the LIG4-XRCC4 subcomplex has a 1:2 stoichiometry and XRCC4 is required for LIG4 stability. Component of the core long-range non-homologous end joining (NHEJ) complex (also named DNA-PK complex) composed of PRKDC, LIG4, XRCC4, XRCC6/Ku70, XRCC5/Ku86 and NHEJ1/XLF. Additional component of the NHEJ complex includes PAXX. Following autophosphorylation, PRKDC dissociates from DNA, leading to formation of the short-range NHEJ complex, composed of LIG4, XRCC4, XRCC6/Ku70, XRCC5/Ku86 and NHEJ1/XLF. Interacts with PRKDC; the interaction is direct. Interacts with XRCC6/Ku70; the interaction is direct. Interacts with APTX and APLF. Forms a heterotetramer with IFFO1; the interaction involves LIG4-free XRCC4 and leads to the relocalization of IFFO1 to the sites of DNA damage. Interacts with PNKP; mainly interacts with PNKP when phosphorylated at Thr-231, but is also able to interact at much lower level with PNKP when not unphosphorylated. Interacts with POLL (DNA polymerase lambda). In terms of assembly, interacts with XKR4; interacts with the processed form of XKR4, which is cleaved by caspase. In terms of processing, phosphorylated by PRKDC at the C-terminus in response to DNA damage; Ser-254 and Ser-312 constitute the main phosphorylation sites. Phosphorylation by PRKDC at the C-terminus of XRCC4 and NHEJ1/XLF are highly redundant and regulate ability of the XRCC4-NHEJ1/XLF subcomplex to bridge DNA. Phosphorylation by PRKDC does not prevent interaction with NHEJ1/XLF but disrupts ability to bridge DNA and promotes detachment from DNA. Phosphorylation at Ser-319 and Ser-320 by PRKDC promotes recognition by the SCF(FBXW7) complex and subsequent ubiquitination via 'Lys-63'-linked ubiquitin. Phosphorylation at Thr-231 by CK2 promotes interaction with PNKP; regulating PNKP activity and localization to DNA damage sites. Phosphorylation by CK2 promotes interaction with APTX. Ubiquitinated at Lys-290 by the SCF(FBXW7) complex via 'Lys-63'-linked ubiquitination, thereby promoting double-strand break repair: the SCF(FBXW7) complex specifically recognizes XRCC4 when phosphorylated at Ser-319 and Ser-320 by PRKDC, and 'Lys-63'-linked ubiquitination facilitates DNA non-homologous end joining (NHEJ) by enhancing association with XRCC5/Ku80 and XRCC6/Ku70. Monoubiquitinated. Post-translationally, undergoes proteolytic processing by caspase-3 (CASP3). This generates the protein XRCC4, C-terminus (XRCC4/C), which translocates to the cytoplasm and activates phospholipid scramblase activity of XKR4, thereby promoting phosphatidylserine exposure on apoptotic cell surface.

The protein localises to the nucleus. The protein resides in the chromosome. Its subcellular location is the cytoplasm. DNA non-homologous end joining (NHEJ) core factor, required for double-strand break repair and V(D)J recombination. Acts as a scaffold protein that regulates recruitment of other proteins to DNA double-strand breaks (DSBs). Associates with NHEJ1/XLF to form alternating helical filaments that bridge DNA and act like a bandage, holding together the broken DNA until it is repaired. The XRCC4-NHEJ1/XLF subcomplex binds to the DNA fragments of a DSB in a highly diffusive manner and robustly bridges two independent DNA molecules, holding the broken DNA fragments in close proximity to one other. The mobility of the bridges ensures that the ends remain accessible for further processing by other repair factors. Plays a key role in the NHEJ ligation step of the broken DNA during DSB repair via direct interaction with DNA ligase IV (LIG4): the LIG4-XRCC4 subcomplex reseals the DNA breaks after the gap filling is completed. XRCC4 stabilizes LIG4, regulates its subcellular localization and enhances LIG4's joining activity. Binding of the LIG4-XRCC4 subcomplex to DNA ends is dependent on the assembly of the DNA-dependent protein kinase complex DNA-PK to these DNA ends. Promotes displacement of PNKP from processed strand break termini. In terms of biological role, acts as an activator of the phospholipid scramblase activity of XKR4. This form, which is generated upon caspase-3 (CASP3) cleavage, translocates into the cytoplasm and interacts with XKR4, thereby promoting phosphatidylserine scramblase activity of XKR4 and leading to phosphatidylserine exposure on apoptotic cell surface. This Mus musculus (Mouse) protein is DNA repair protein XRCC4.